The following is a 474-amino-acid chain: Ribulose bisphosphate carboxylase large chain (474 aa).

Substrate-binding residues include Asn122 and Thr172. The Proton acceptor role is filled by Lys174. Lys176 is a substrate binding site. 3 residues coordinate Mg(2+): Lys200, Asp202, and Glu203. Lys200 is subject to N6-carboxylysine. The active-site Proton acceptor is His293. Substrate contacts are provided by Arg294, His326, and Ser378.

It belongs to the RuBisCO large chain family. Type I subfamily. Heterohexadecamer of 8 large chains and 8 small chains; disulfide-linked. The disulfide link is formed within the large subunit homodimers. Mg(2+) serves as cofactor. The disulfide bond which can form in the large chain dimeric partners within the hexadecamer appears to be associated with oxidative stress and protein turnover.

The protein localises to the carboxysome. The enzyme catalyses 2 (2R)-3-phosphoglycerate + 2 H(+) = D-ribulose 1,5-bisphosphate + CO2 + H2O. The catalysed reaction is D-ribulose 1,5-bisphosphate + O2 = 2-phosphoglycolate + (2R)-3-phosphoglycerate + 2 H(+). In terms of biological role, ruBisCO catalyzes two reactions: the carboxylation of D-ribulose 1,5-bisphosphate, the primary event in carbon dioxide fixation, as well as the oxidative fragmentation of the pentose substrate in the photorespiration process. Both reactions occur simultaneously and in competition at the same active site. The sequence is that of Ribulose bisphosphate carboxylase large chain from Synechococcus sp. (strain JA-2-3B'a(2-13)) (Cyanobacteria bacterium Yellowstone B-Prime).